The primary structure comprises 341 residues: Protein pelota homolog (341 aa).

This sequence belongs to the eukaryotic release factor 1 family. Pelota subfamily. In terms of assembly, monomer. The cofactor is a divalent metal cation.

The protein localises to the cytoplasm. In terms of biological role, may function in recognizing stalled ribosomes, interact with stem-loop structures in stalled mRNA molecules, and effect endonucleolytic cleavage of the mRNA. May play a role in the release non-functional ribosomes and degradation of damaged mRNAs. Has endoribonuclease activity. This Methanospirillum hungatei JF-1 (strain ATCC 27890 / DSM 864 / NBRC 100397 / JF-1) protein is Protein pelota homolog.